A 202-amino-acid chain; its full sequence is MASQTLVSPSPLSSHSLLRTSFSGVSVKLAPQFSTLATSNFKPLTVVAAAKKAVSVLKGTSAVEGVVTLTQDDEGPTTVNVRITGLTPGLHGFHLHEYGDTTNGCISTGPHFNPNKLTHGAPEDEIRHAGDLGNIVANAEGVAEATIVDNQIPLTGPNSVVGRALVVHELQDDLGKGGHELSLSTGNAGGRLACGVVGLTPV.

A chloroplast-targeting transit peptide spans 1–48; the sequence is MASQTLVSPSPLSSHSLLRTSFSGVSVKLAPQFSTLATSNFKPLTVVA. Positions 94, 96, and 111 each coordinate Cu cation. The cysteines at positions 105 and 194 are disulfide-linked. Zn(2+) contacts are provided by H111, H119, H128, and D131. H168 is a Cu cation binding site.

This sequence belongs to the Cu-Zn superoxide dismutase family. In terms of assembly, homotetramer. It depends on Cu cation as a cofactor. Zn(2+) serves as cofactor.

Its subcellular location is the plastid. It is found in the chloroplast. The enzyme catalyses 2 superoxide + 2 H(+) = H2O2 + O2. Destroys radicals which are normally produced within the cells and which are toxic to biological systems. The chain is Superoxide dismutase [Cu-Zn], chloroplastic (SODCP) from Pisum sativum (Garden pea).